The sequence spans 677 residues: Zinc finger and BTB domain-containing protein 5 (677 aa).

One can recognise a BTB domain in the interval 24–93 (CDCVIVVGNR…MYTSTLMLGE (70 aa)). Residues 158–181 (LNSSQNGEEQPAPMSSSMRSNLDQ) show a composition bias toward polar residues. Disordered stretches follow at residues 158–252 (LNSS…MTDN) and 287–312 (SMASRATQVETSFDQEAAPEKSSFQC). Ser-234 is subject to Phosphoserine. A Glycyl lysine isopeptide (Lys-Gly) (interchain with G-Cter in SUMO2) cross-link involves residue Lys-239. Polar residues predominate over residues 287–300 (SMASRATQVETSFD). Residues Lys-322 and Lys-330 each participate in a glycyl lysine isopeptide (Lys-Gly) (interchain with G-Cter in SUMO2) cross-link. Residues 331–387 (SEPLSSPEPQDEVSDVTSQAEGSESVEVEGVVVSAEKIDLSPESSDRSFSDPQSSTD) are disordered. Over residues 350-365 (AEGSESVEVEGVVVSA) the composition is skewed to low complexity. The segment covering 366–379 (EKIDLSPESSDRSF) has biased composition (basic and acidic residues). At Ser-371 the chain carries Phosphoserine. Glycyl lysine isopeptide (Lys-Gly) (interchain with G-Cter in SUMO2) cross-links involve residues Lys-404 and Lys-415. The segment at 447–474 (LLSPEAGPAGGPSSAPGSHVENPFSEPA) is disordered. Residues 449–464 (SPEAGPAGGPSSAPGS) show a composition bias toward low complexity. Lys-541 participates in a covalent cross-link: Glycyl lysine isopeptide (Lys-Gly) (interchain with G-Cter in SUMO2). Residues 552-576 (QIPENSTSSQLMMNGATSSFENGHP) show a composition bias toward polar residues. Positions 552–585 (QIPENSTSSQLMMNGATSSFENGHPSQPGPPQLT) are disordered. Glycyl lysine isopeptide (Lys-Gly) (interchain with G-Cter in SUMO2) cross-links involve residues Lys-594 and Lys-597. The segment at 613-635 (YACKICCKTFLTLTDCKKHIRVH) adopts a C2H2-type 1 zinc-finger fold. The segment at 641-664 (YACLKCGKRFSQSSHLYKHSKTTC) adopts a C2H2-type 2; atypical zinc-finger fold. Glycyl lysine isopeptide (Lys-Gly) (interchain with G-Cter in SUMO2) cross-links involve residues Lys-645 and Lys-658.

Its subcellular location is the nucleus. In terms of biological role, may be involved in transcriptional regulation. This chain is Zinc finger and BTB domain-containing protein 5 (ZBTB5), found in Homo sapiens (Human).